The sequence spans 504 residues: Paired zinc finger protein 1 (504 aa).

2 C2H2-type zinc fingers span residues 12–35 (LLCGICGKYFSDDESLREHRRQRH) and 39–62 (HMCLLCNRRIPENETLREHMKNKH). Residues 68–91 (FICVCCNWSFGTEIYLKCHEECMK) form a C2H2-type 3; degenerate zinc finger. 2 disordered regions span residues 115-136 (ALNTDPQNGSDDVPHSSPSPVP) and 154-173 (IESADRSSASTSTPRTLVSG). Residues 159–172 (RSSASTSTPRTLVS) show a composition bias toward polar residues. C2H2-type zinc fingers lie at residues 179–202 (IPCGFCGKDFFHEGSLREHRRRFH) and 206–229 (HTCLLCNRQIPENETVRDHMKSQH). The C2H2-type 6; degenerate zinc-finger motif lies at 235–258 (YNCLCCNWTFLNQVHLISHKTCLK). The C2H2-type 7 zinc-finger motif lies at 309-332 (LSCKSCGKFFYSERSLSKHHRQIH). The C2H2-type 8; degenerate zinc finger occupies 365 to 389 (FNCRCCNWSFATRRCLMSHVECLKK).

Expressed in proximal gonad.

Functionally, possible transcriptional regulator. Involved in promoting segregation of chromosomes during meiosis, perhaps acting downstream of the let-60 RAS / mpk-1 MAPK signaling pathway. In Caenorhabditis elegans, this protein is Paired zinc finger protein 1.